The primary structure comprises 136 residues: Putative pre-16S rRNA nuclease (136 aa).

The protein belongs to the YqgF nuclease family.

It localises to the cytoplasm. Could be a nuclease involved in processing of the 5'-end of pre-16S rRNA. This chain is Putative pre-16S rRNA nuclease, found in Francisella philomiragia subsp. philomiragia (strain ATCC 25017 / CCUG 19701 / FSC 153 / O#319-036).